We begin with the raw amino-acid sequence, 100 residues long: Large ribosomal subunit protein uL23 (100 aa).

This sequence belongs to the universal ribosomal protein uL23 family. As to quaternary structure, part of the 50S ribosomal subunit. Contacts protein L29, and trigger factor when it is bound to the ribosome.

Its function is as follows. One of the early assembly proteins it binds 23S rRNA. One of the proteins that surrounds the polypeptide exit tunnel on the outside of the ribosome. Forms the main docking site for trigger factor binding to the ribosome. This is Large ribosomal subunit protein uL23 from Mycolicibacterium vanbaalenii (strain DSM 7251 / JCM 13017 / BCRC 16820 / KCTC 9966 / NRRL B-24157 / PYR-1) (Mycobacterium vanbaalenii).